The primary structure comprises 288 residues: NAD(P)H-hydrate epimerase (288 aa).

The N-terminal 47 residues, 1-47, are a transit peptide targeting the mitochondrion; that stretch reads MSRLRALLGLGLLVAGSRVPRIKSQTIACRSGPTWWGPQRLNSGGRW. S49 carries the phosphoserine modification. The YjeF N-terminal domain maps to 65–275; that stretch reads AQAVDQELFN…ALEKKYQLNL (211 aa). 119 to 123 is a binding site for (6S)-NADPHX; it reads NNGGD. N120 provides a ligand contact to K(+). Position 144 is an N6-succinyllysine (K144). D185 is a K(+) binding site. (6S)-NADPHX is bound by residues 189-195 and D218; that span reads GFSFKGD. S221 serves as a coordination point for K(+).

Belongs to the NnrE/AIBP family. As to quaternary structure, homodimer. Interacts with APOA1 and APOA2. It depends on K(+) as a cofactor. Post-translationally, undergoes physiological phosphorylation during sperm capacitation, downstream to PKA activation. As to expression, ubiquitously expressed, with highest levels in kidney, heart and liver. Present in cerebrospinal fluid and urine but not in serum from healthy patients. Present in serum of sepsis patients (at protein level).

The protein resides in the mitochondrion. It localises to the secreted. The catalysed reaction is (6R)-NADHX = (6S)-NADHX. It carries out the reaction (6R)-NADPHX = (6S)-NADPHX. Its function is as follows. Catalyzes the epimerization of the S- and R-forms of NAD(P)HX, a damaged form of NAD(P)H that is a result of enzymatic or heat-dependent hydration. This is a prerequisite for the S-specific NAD(P)H-hydrate dehydratase to allow the repair of both epimers of NAD(P)HX. Accelerates cholesterol efflux from endothelial cells to high-density lipoprotein (HDL) and thereby regulates angiogenesis. The chain is NAD(P)H-hydrate epimerase from Homo sapiens (Human).